A 371-amino-acid polypeptide reads, in one-letter code: Ligninase LG2 (371 aa).

Residues 1–21 (MAFKQLFAAITVALSLTAANA) form the signal peptide. The propeptide occupies 22-28 (AVVKEKR). Intrachain disulfides connect Cys-31-Cys-43, Cys-42-Cys-313, Cys-62-Cys-148, and Cys-277-Cys-345. His-75 serves as the catalytic Proton acceptor. Ca(2+) is bound by residues Asp-76, Gly-94, Asp-96, and Ser-98. Trp-199 is modified (3-hydroxytryptophan). His-204 contributes to the heme b binding site. 5 residues coordinate Ca(2+): Ser-205, Asp-222, Thr-224, Ile-227, and Asp-229. Asn-285 carries an N-linked (GlcNAc...) asparagine glycan.

Belongs to the peroxidase family. Ligninase subfamily. It depends on Ca(2+) as a cofactor. The cofactor is heme b.

It catalyses the reaction 1-(3,4-dimethoxyphenyl)-2-(2-methoxyphenoxy)propane-1,3-diol + H2O2 = 3,4-dimethoxybenzaldehyde + guaiacol + glycolaldehyde + H2O. It carries out the reaction 2 (3,4-dimethoxyphenyl)methanol + H2O2 = 2 (3,4-dimethoxyphenyl)methanol radical + 2 H2O. It functions in the pathway secondary metabolite metabolism; lignin degradation. Depolymerization of lignin. Catalyzes the C(alpha)-C(beta) cleavage of the propyl side chains of lignin. The sequence is that of Ligninase LG2 (GLG2) from Phanerodontia chrysosporium (White-rot fungus).